The sequence spans 623 residues: E3 ubiquitin-protein ligase DTX1 (623 aa).

WWE domains lie at 13-93 (HNFG…PVRR) and 94-170 (NFFE…RLRR). A disordered region spans residues 224-319 (KVPSGPPPAL…RASIPPGVPA (96 aa)). Over residues 227 to 242 (SGPPPALPPPPPPPIH) the composition is skewed to pro residues. The span at 292 to 311 (GQNNLNRPGEQRTSGSSSRA) shows a compositional bias: polar residues. Residues 413 to 474 (CTICMERLVT…DGSLQCPTCK (62 aa)) form an RING-type zinc finger.

Belongs to the Deltex family. As to quaternary structure, may form a homo- or heterodimer with other members of the Deltex family. Probably interacts with Notch1. As to expression, specifically expressed in regions undergoing neuronal differentiation. Mainly colocalizes with Notch1.

It catalyses the reaction S-ubiquitinyl-[E2 ubiquitin-conjugating enzyme]-L-cysteine + [acceptor protein]-L-lysine = [E2 ubiquitin-conjugating enzyme]-L-cysteine + N(6)-ubiquitinyl-[acceptor protein]-L-lysine.. It functions in the pathway protein modification; protein ubiquitination. Regulator of Notch signaling, a signaling pathway involved in cell-cell communications that regulates a broad spectrum of cell-fate determinations. Probably acts both as a positive and negative regulator of Notch, depending on the developmental and cell context. Functions as a ubiquitin ligase protein in vivo, mediating ubiquitination and promoting degradation of MEKK1, suggesting that it may regulate the Notch pathway via some ubiquitin ligase activity. This is E3 ubiquitin-protein ligase DTX1 (dtx1) from Xenopus laevis (African clawed frog).